The primary structure comprises 304 residues: MRLPIFLDTDPGIDDAVAIAAAIFTPELDLQLMTTVAGNVSVEKTTRNALQLLHFWNVDIPLAQGAAVPLVRAPRDAASVHGESGMAGYDFVEHNRKPLGIPAFLAIRDALMRAPEPVTLVAIGPLTNIALLLSQCPECKPYIRRLVIMGGSAGRGNCTPNAEFNIAADPEAASCVFRSGIEIVMCGLDVTNQAILTPDYLATLPELNRTGKMLHALFSHYRSGSMQSGLRMHDLCAIAWLVRPELFTLKPCFVAVETQGEFTSGTTVVDIDGCLGKPANVKVALDLNVKGFQQWVAEVLALVP.

His233 is an active-site residue.

The protein belongs to the IUNH family. RihC subfamily.

Functionally, hydrolyzes both purine and pyrimidine ribonucleosides with a broad-substrate specificity. The sequence is that of Non-specific ribonucleoside hydrolase RihC from Escherichia coli O127:H6 (strain E2348/69 / EPEC).